Consider the following 270-residue polypeptide: MLLVIDAGNTNIVFAVHDGESWLGQWRISTNEARTADEYAAWLLTLFDRVGVNAKAITRAIIGTVVPVALYELRRFCREWLDVVPLVANARLDWGIDVLVDNPNELGADRRLNGLAGRELFGAPLIVVDFGTATTFDVVNSAGQFCGGAIAPGVNLSIDALHRAAARLPRMSIGRPTAAIGRNTSVAMRSGLFWGYVGLVEGLIHRISDEMDAKPTVIATGGLAPLFSEGTPLFDVLAPDLTLDGLRLLADRNTGPPLSYSPERSQGIGQ.

Residue 6 to 13 (DAGNTNIV) participates in ATP binding. 107 to 110 (GADR) serves as a coordination point for substrate. Aspartate 109 (proton acceptor) is an active-site residue. Aspartate 129 is a K(+) binding site. Threonine 132 is an ATP binding site. Threonine 184 is a substrate binding site.

The protein belongs to the type III pantothenate kinase family. As to quaternary structure, homodimer. It depends on NH4(+) as a cofactor. Requires K(+) as cofactor.

The protein localises to the cytoplasm. It carries out the reaction (R)-pantothenate + ATP = (R)-4'-phosphopantothenate + ADP + H(+). Its pathway is cofactor biosynthesis; coenzyme A biosynthesis; CoA from (R)-pantothenate: step 1/5. Functionally, catalyzes the phosphorylation of pantothenate (Pan), the first step in CoA biosynthesis. This chain is Type III pantothenate kinase, found in Gluconobacter oxydans (strain 621H) (Gluconobacter suboxydans).